The chain runs to 883 residues: Translation initiation factor IF-2 (883 aa).

Disordered stretches follow at residues 52-102 (KGRD…VNVE) and 115-297 (VEAE…PTQP). Basic and acidic residues-rich tracts occupy residues 115 to 179 (VEAE…REAT) and 204 to 237 (AAEKEEARRREEEKERRRLEQEARREREAEERAA). The span at 239–248 (KTGATAPAAK) shows a compositional bias: low complexity. The span at 265 to 275 (PGRRGGKKGGR) shows a compositional bias: basic residues. Positions 276 to 285 (RAASGGEAAK) are enriched in low complexity. The region spanning 383–550 (PRPPVVTVMG…AILLQAELME (168 aa)) is the tr-type G domain. A G1 region spans residues 392–399 (GHVDHGKT). Position 392 to 399 (392 to 399 (GHVDHGKT)) interacts with GTP. The segment at 417–421 (GITQH) is G2. Residues 438 to 441 (DTPG) form a G3 region. GTP is bound by residues 438–442 (DTPGH) and 492–495 (NKID). Positions 492–495 (NKID) are G4. A G5 region spans residues 528-530 (SAK).

This sequence belongs to the TRAFAC class translation factor GTPase superfamily. Classic translation factor GTPase family. IF-2 subfamily.

The protein resides in the cytoplasm. Functionally, one of the essential components for the initiation of protein synthesis. Protects formylmethionyl-tRNA from spontaneous hydrolysis and promotes its binding to the 30S ribosomal subunits. Also involved in the hydrolysis of GTP during the formation of the 70S ribosomal complex. This is Translation initiation factor IF-2 from Alkalilimnicola ehrlichii (strain ATCC BAA-1101 / DSM 17681 / MLHE-1).